A 57-amino-acid chain; its full sequence is Small ribosomal subunit protein bS21 (57 aa).

The interval 35 to 57 (REHYEKPSVKRKKKAEAARKKKF) is disordered. Basic residues predominate over residues 43-57 (VKRKKKAEAARKKKF).

This sequence belongs to the bacterial ribosomal protein bS21 family.

The protein is Small ribosomal subunit protein bS21 of Alkaliphilus metalliredigens (strain QYMF).